The sequence spans 338 residues: MSSEMLPAFSETCNVERQKNLSEDGEQNQKPGSSERFQPISKRQMKKLMKQKQWEEQRELRKQKRKEKRKRKQLERQCQPESNSDGSDRKRIRRDVVHSPLRLIIDCSFDSLMVLKDIKKLHKQIQRCYAENRRALHPVQFYLTSHGGQLKKNMDENDKGWVNWKDIHIKPEHYSEFIQKEDLIYLTSDSPNILKELDESKAYVIGGLVDHNHHKGLTYKQASDHGIDHAQLPLGNFVKMNSRKVLAVNHVFEIILEYLETRDWQEAFFTILPQRKGAVPTDQACESCSHDKKFARVEGGLNSDSSEEENRHELDSTHEEEKQDKENSTESTVNSVPH.

2 disordered regions span residues 1–91 and 296–338; these read MSSE…DRKR and RVEG…SVPH. Position 22 is a phosphoserine (Ser22). The stretch at 52–80 forms a coiled coil; the sequence is KQWEEQRELRKQKRKEKRKRKQLERQCQP. The span at 61–73 shows a compositional bias: basic residues; sequence RKQKRKEKRKRKQ. One can recognise an SAM-dependent MTase TRM10-type domain in the interval 88 to 279; sequence DRKRIRRDVV…TILPQRKGAV (192 aa). Over residues 308–328 the composition is skewed to basic and acidic residues; the sequence is EENRHELDSTHEEEKQDKENS. The span at 329–338 shows a compositional bias: polar residues; it reads TESTVNSVPH. Ser335 carries the post-translational modification Phosphoserine.

The protein belongs to the class IV-like SAM-binding methyltransferase superfamily. TRM10 family. In terms of assembly, interacts with tRNA.

Its subcellular location is the nucleus. It localises to the nucleolus. The enzyme catalyses guanosine(9) in tRNA + S-adenosyl-L-methionine = N(1)-methylguanosine(9) in tRNA + S-adenosyl-L-homocysteine + H(+). S-adenosyl-L-methionine-dependent guanine N(1)-methyltransferase that catalyzes the formation of N(1)-methylguanine at position 9 (m1G9) in tRNAs. Probably not able to catalyze formation of N(1)-methyladenine at position 9 (m1A9) in tRNAs. This Bos taurus (Bovine) protein is tRNA methyltransferase 10 homolog A (TRMT10A).